The sequence spans 310 residues: MFRFDKEQIVLDIAGTKIGGQPGEYPTVLAGTIFYGGHSIIEDEKAGVFDKDKAEALIKTQEEMSDVTGNPHIVQTFGQTPEAIVKYLEFVGDVTDAPFFIDSTSGEARIAGANYASEVGLEDRAIYNSVNMAADEAELEALKETKLSASIVLGFNPMDPTVDGKIGIWEDGAGTIDKGLLEMAAECGIDKYLMDVAVTPLGQGAGVAVRTSFAVKSKWGYPVGSGIHNVPSAWDWLREYKKDHKEAWPVCDVGSNLIQQMAGGDFVLYGPIENAKMAFPACAMADIFISEAAKDIGTEPVEDHPFFKLL.

The protein belongs to the MtrH family. In terms of assembly, the complex is composed of 8 subunits; MtrA, MtrB, MtrC, MtrD, MtrE, MtrF, MtrG and MtrH.

The enzyme catalyses 5-methyl-5,6,7,8-tetrahydromethanopterin + coenzyme M + 2 Na(+)(in) = 5,6,7,8-tetrahydromethanopterin + methyl-coenzyme M + 2 Na(+)(out). It participates in one-carbon metabolism; methanogenesis from CO(2); methyl-coenzyme M from 5,10-methylene-5,6,7,8-tetrahydromethanopterin: step 2/2. Part of a complex that catalyzes the formation of methyl-coenzyme M and tetrahydromethanopterin from coenzyme M and methyl-tetrahydromethanopterin. This is an energy-conserving, sodium-ion translocating step. MtrH catalyzes the transfer of the methyl group from methyl-tetrahydromethanopterin to the corrinoid prosthetic group of MtrA. The chain is Tetrahydromethanopterin S-methyltransferase subunit H from Methanothermobacter thermautotrophicus (strain ATCC 29096 / DSM 1053 / JCM 10044 / NBRC 100330 / Delta H) (Methanobacterium thermoautotrophicum).